The primary structure comprises 344 residues: GTP 3',8-cyclase (344 aa).

The Radical SAM core domain maps to 19-239 (PFGRTIDYLR…ANYTLTDLPD (221 aa)). GTP is bound at residue Arg-28. [4Fe-4S] cluster-binding residues include Cys-35 and Cys-39. Position 41 (Tyr-41) interacts with S-adenosyl-L-methionine. Cys-42 serves as a coordination point for [4Fe-4S] cluster. Arg-77 serves as a coordination point for GTP. Gly-81 is an S-adenosyl-L-methionine binding site. Thr-111 is a binding site for GTP. Ser-135 provides a ligand contact to S-adenosyl-L-methionine. Lys-171 is a GTP binding site. Position 205 (Met-205) interacts with S-adenosyl-L-methionine. [4Fe-4S] cluster-binding residues include Cys-268 and Cys-271. A GTP-binding site is contributed by 273 to 275 (RVR). Cys-285 contributes to the [4Fe-4S] cluster binding site.

Belongs to the radical SAM superfamily. MoaA family. As to quaternary structure, monomer and homodimer. [4Fe-4S] cluster is required as a cofactor.

It carries out the reaction GTP + AH2 + S-adenosyl-L-methionine = (8S)-3',8-cyclo-7,8-dihydroguanosine 5'-triphosphate + 5'-deoxyadenosine + L-methionine + A + H(+). It functions in the pathway cofactor biosynthesis; molybdopterin biosynthesis. Functionally, catalyzes the cyclization of GTP to (8S)-3',8-cyclo-7,8-dihydroguanosine 5'-triphosphate. In Rhodopseudomonas palustris (strain ATCC BAA-98 / CGA009), this protein is GTP 3',8-cyclase.